A 429-amino-acid chain; its full sequence is Gamma-glutamyl phosphate reductase (429 aa).

It belongs to the gamma-glutamyl phosphate reductase family.

Its subcellular location is the cytoplasm. It catalyses the reaction L-glutamate 5-semialdehyde + phosphate + NADP(+) = L-glutamyl 5-phosphate + NADPH + H(+). It participates in amino-acid biosynthesis; L-proline biosynthesis; L-glutamate 5-semialdehyde from L-glutamate: step 2/2. Catalyzes the NADPH-dependent reduction of L-glutamate 5-phosphate into L-glutamate 5-semialdehyde and phosphate. The product spontaneously undergoes cyclization to form 1-pyrroline-5-carboxylate. The protein is Gamma-glutamyl phosphate reductase of Bradyrhizobium sp. (strain BTAi1 / ATCC BAA-1182).